Reading from the N-terminus, the 195-residue chain is Molybdenum cofactor guanylyltransferase (195 aa).

GTP-binding positions include 10–12 (LAG), Lys-23, Asn-51, Asp-69, and Asp-99. Asp-99 contacts Mg(2+).

The protein belongs to the MobA family. Monomer. Mg(2+) is required as a cofactor.

The protein resides in the cytoplasm. It catalyses the reaction Mo-molybdopterin + GTP + H(+) = Mo-molybdopterin guanine dinucleotide + diphosphate. Transfers a GMP moiety from GTP to Mo-molybdopterin (Mo-MPT) cofactor (Moco or molybdenum cofactor) to form Mo-molybdopterin guanine dinucleotide (Mo-MGD) cofactor. The sequence is that of Molybdenum cofactor guanylyltransferase from Shewanella putrefaciens (strain CN-32 / ATCC BAA-453).